The primary structure comprises 197 residues: Protein GrpE (197 aa).

Residues 1–40 (MSSKEQKTPEGQAPEEIIMDRHEEIEAVEPEASAEQVDPR) form a disordered region.

Belongs to the GrpE family. As to quaternary structure, homodimer.

It is found in the cytoplasm. Its function is as follows. Participates actively in the response to hyperosmotic and heat shock by preventing the aggregation of stress-denatured proteins, in association with DnaK and GrpE. It is the nucleotide exchange factor for DnaK and may function as a thermosensor. Unfolded proteins bind initially to DnaJ; upon interaction with the DnaJ-bound protein, DnaK hydrolyzes its bound ATP, resulting in the formation of a stable complex. GrpE releases ADP from DnaK; ATP binding to DnaK triggers the release of the substrate protein, thus completing the reaction cycle. Several rounds of ATP-dependent interactions between DnaJ, DnaK and GrpE are required for fully efficient folding. This chain is Protein GrpE, found in Shigella flexneri serotype 5b (strain 8401).